A 100-amino-acid chain; its full sequence is NADH-quinone oxidoreductase subunit K (100 aa).

The next 3 membrane-spanning stretches (helical) occupy residues 2–22, 28–48, and 64–84; these read IPLS…VAGF, IIVM…NLVA, and FVIT…ICLF.

This sequence belongs to the complex I subunit 4L family. NDH-1 is composed of 14 different subunits. Subunits NuoA, H, J, K, L, M, N constitute the membrane sector of the complex.

The protein resides in the cell inner membrane. It carries out the reaction a quinone + NADH + 5 H(+)(in) = a quinol + NAD(+) + 4 H(+)(out). In terms of biological role, NDH-1 shuttles electrons from NADH, via FMN and iron-sulfur (Fe-S) centers, to quinones in the respiratory chain. The immediate electron acceptor for the enzyme in this species is believed to be ubiquinone. Couples the redox reaction to proton translocation (for every two electrons transferred, four hydrogen ions are translocated across the cytoplasmic membrane), and thus conserves the redox energy in a proton gradient. The chain is NADH-quinone oxidoreductase subunit K from Desulfovibrio desulfuricans (strain ATCC 27774 / DSM 6949 / MB).